Reading from the N-terminus, the 393-residue chain is Putative serpin-Z6A (393 aa).

The tract at residues 336-360 (GTEAAAATAVLMEGAARYAPPPPPR) is RCL.

This sequence belongs to the serpin family.

Its function is as follows. Probable serine protease inhibitor. The sequence is that of Putative serpin-Z6A from Oryza sativa subsp. japonica (Rice).